Here is a 467-residue protein sequence, read N- to C-terminus: Cytochrome c-552 (467 aa).

Positions 1–27 (MVKKLTGKSFALSALVAASFVAAGAMA) are cleaved as a signal peptide. His87 lines the heme c pocket. Heme is bound by residues Cys115, Cys118, and Lys119. 6 residues coordinate heme c: Cys153, Cys156, His157, Cys195, Cys198, and His199. The Ca(2+) site is built by Glu201, Tyr202, Lys250, and Gln252. Tyr202 is a binding site for substrate. His253 is a binding site for substrate. Residues His264, Cys271, Cys274, His275, His290, Cys303, Cys306, His307, and His382 each coordinate heme c.

It belongs to the cytochrome c-552 family. The cofactor is Ca(2+). Requires heme c as cofactor.

Its subcellular location is the periplasm. The catalysed reaction is 6 Fe(III)-[cytochrome c] + NH4(+) + 2 H2O = 6 Fe(II)-[cytochrome c] + nitrite + 8 H(+). The protein operates within nitrogen metabolism; nitrate reduction (assimilation). In terms of biological role, catalyzes the reduction of nitrite to ammonia, consuming six electrons in the process. The protein is Cytochrome c-552 of Shewanella amazonensis (strain ATCC BAA-1098 / SB2B).